The chain runs to 413 residues: SWIRM domain-containing protein FUN19 (413 aa).

The span at 35 to 51 shows a compositional bias: low complexity; the sequence is KASNNNNDSNKNGLNMS. 3 disordered regions span residues 35-55, 189-211, and 249-271; these read KASNNNNDSNKNGLNMSDYSN, YNDDMTPPPLPSSSSRLPSPLAS, and YSPQRRTMTTSPHRAKKFSPSAS. Threonine 194 carries the post-translational modification Phosphothreonine. The segment covering 200 to 211 has biased composition (low complexity); sequence SSSSRLPSPLAS. Residues serine 207 and serine 211 each carry the phosphoserine modification. The SWIRM domain maps to 316–413; that stretch reads LKIEWKGSPM…LQDSNFTKYL (98 aa).

The sequence is that of SWIRM domain-containing protein FUN19 (FUN19) from Saccharomyces cerevisiae (strain ATCC 204508 / S288c) (Baker's yeast).